Reading from the N-terminus, the 104-residue chain is L-rhamnose mutarotase (104 aa).

Substrate is bound at residue Y18. The Proton donor role is filled by H22. Residues Y41 and W76–W77 each bind substrate.

It belongs to the rhamnose mutarotase family. In terms of assembly, homodimer.

The protein localises to the cytoplasm. The catalysed reaction is alpha-L-rhamnose = beta-L-rhamnose. It participates in carbohydrate metabolism; L-rhamnose metabolism. Functionally, involved in the anomeric conversion of L-rhamnose. This chain is L-rhamnose mutarotase, found in Escherichia coli O7:K1 (strain IAI39 / ExPEC).